The sequence spans 151 residues: Putative pre-16S rRNA nuclease (151 aa).

The protein belongs to the YqgF nuclease family.

The protein resides in the cytoplasm. Functionally, could be a nuclease involved in processing of the 5'-end of pre-16S rRNA. The polypeptide is Putative pre-16S rRNA nuclease (Paraburkholderia phymatum (strain DSM 17167 / CIP 108236 / LMG 21445 / STM815) (Burkholderia phymatum)).